We begin with the raw amino-acid sequence, 157 residues long: Protein Smg homolog (157 aa).

It belongs to the Smg family.

This Xanthomonas campestris pv. campestris (strain 8004) protein is Protein Smg homolog.